Consider the following 87-residue polypeptide: Exendin-3 (87 aa).

Positions 1–21 (MKIILWLCVFGLFLATLFPVS) are cleaved as a signal peptide. Residues 22 to 45 (WQMPVESGLSSEDSASSESFASKI) constitute a propeptide that is removed on maturation. At Ser-86 the chain carries Serine amide.

The protein belongs to the glucagon family. In terms of tissue distribution, expressed by the venom gland.

It localises to the secreted. Stimulates vasoactive intestinal peptide (VIP) receptors in high concentrations (&gt;100 nM), resulting in both an increase in cAMP and amylase secretion from pancreatic acini, although at low concentrations (between 0.3 and 3 nM) it increases cAMP without stimulating amylase release. Stimulates the GLP-1 receptor (GLP1R). Induces hypotension that is mediated by relaxation of cardiac smooth muscle. The polypeptide is Exendin-3 (Heloderma horridum horridum (Mexican beaded lizard)).